Here is a 418-residue protein sequence, read N- to C-terminus: MAEIKNYTLNFGPQHPAAHGVLRLVLELDGEVIQRADPHIGLLHRATEKLAEHKTFIQALPYMDRLDYVSMMCNEHAYVMAIEKLLGIEAPLRAQYIRVMFDEITRVLNHLMSLGSHALDVGAMAVFLYAFREREDLMDCYEAVSGARMHAAYYRPGGVYRDLPDTMPQYGDSSKYRGEKEVRAMNDARSGSLLDFIEDFTNRFPSCVDEYETLLTDNRIWKQRLVGIGVVDPDRAKALGFTGPMLRGSGVAWDLRKTQPYEVYDLMDFDVPVGVNGDCYDRYLVRVAEMRESNRIIRQCVEWLRNNPGPVMIENHKIAPPSRTAMKSNMEELIHHFKLFSEGFHVPPGEAYAAVEHPKGEFGIYLVADGANKPYRLKIRAPGFAHLQSLDEMARGHMIADAVTIIGTQDIVFGEIDR.

Belongs to the complex I 49 kDa subunit family. As to quaternary structure, NDH-1 is composed of 14 different subunits. Subunits NuoB, C, D, E, F, and G constitute the peripheral sector of the complex.

The protein resides in the cell inner membrane. The catalysed reaction is a quinone + NADH + 5 H(+)(in) = a quinol + NAD(+) + 4 H(+)(out). NDH-1 shuttles electrons from NADH, via FMN and iron-sulfur (Fe-S) centers, to quinones in the respiratory chain. The immediate electron acceptor for the enzyme in this species is believed to be ubiquinone. Couples the redox reaction to proton translocation (for every two electrons transferred, four hydrogen ions are translocated across the cytoplasmic membrane), and thus conserves the redox energy in a proton gradient. The polypeptide is NADH-quinone oxidoreductase subunit D (Bordetella pertussis (strain Tohama I / ATCC BAA-589 / NCTC 13251)).